The chain runs to 176 residues: Ribosome maturation factor RimM (176 aa).

In terms of domain architecture, PRC barrel spans lysine 99–leucine 173.

Belongs to the RimM family. As to quaternary structure, binds ribosomal protein uS19.

The protein localises to the cytoplasm. An accessory protein needed during the final step in the assembly of 30S ribosomal subunit, possibly for assembly of the head region. Essential for efficient processing of 16S rRNA. May be needed both before and after RbfA during the maturation of 16S rRNA. It has affinity for free ribosomal 30S subunits but not for 70S ribosomes. The chain is Ribosome maturation factor RimM from Prochlorococcus marinus (strain MIT 9211).